Here is a 214-residue protein sequence, read N- to C-terminus: Membrane antigen containing repeating peptides (214 aa).

4 consecutive repeat copies span residues 1-14, 15-28, 29-42, and 43-56. The tract at residues 1 to 31 is disordered; it reads QETSAKLADTEETLQETSAKLADTEETLQET. The interval 1–56 is 4 X 14 AA tandem repeats; that stretch reads QETSAKLADTEETLQETSAKLADTEETLQETSAKLADTEETLQETSAKLADTEETL. The tract at residues 180-214 is disordered; sequence CSLHPTPRRLGDVSNRENSIENKTRSASRLSGRLF. The span at 188–203 shows a compositional bias: basic and acidic residues; it reads RLGDVSNRENSIENKT.

The protein resides in the membrane. This Leishmania major protein is Membrane antigen containing repeating peptides.